Consider the following 342-residue polypeptide: HPr kinase/phosphorylase (342 aa).

Catalysis depends on residues histidine 153 and lysine 174. 168–175 (GKSGLGKS) contacts ATP. Residue serine 175 participates in Mg(2+) binding. Aspartate 192 serves as the catalytic Proton acceptor; for phosphorylation activity. Proton donor; for dephosphorylation activity. Positions 217–226 (MEIRGLGVVD) are important for the catalytic mechanism of both phosphorylation and dephosphorylation. Residue glutamate 218 participates in Mg(2+) binding. Residue arginine 259 is part of the active site. An important for the catalytic mechanism of dephosphorylation region spans residues 280–285 (PIFPGK).

It belongs to the HPrK/P family. Homohexamer. Requires Mg(2+) as cofactor.

It catalyses the reaction [HPr protein]-L-serine + ATP = [HPr protein]-O-phospho-L-serine + ADP + H(+). It carries out the reaction [HPr protein]-O-phospho-L-serine + phosphate + H(+) = [HPr protein]-L-serine + diphosphate. In terms of biological role, catalyzes the ATP- as well as the pyrophosphate-dependent phosphorylation of a specific serine residue in HPr, a phosphocarrier protein of the phosphoenolpyruvate-dependent sugar phosphotransferase system (PTS). HprK/P also catalyzes the pyrophosphate-producing, inorganic phosphate-dependent dephosphorylation (phosphorolysis) of seryl-phosphorylated HPr (P-Ser-HPr). The protein is HPr kinase/phosphorylase of Chlorobaculum tepidum (strain ATCC 49652 / DSM 12025 / NBRC 103806 / TLS) (Chlorobium tepidum).